Reading from the N-terminus, the 113-residue chain is Large ribosomal subunit protein bL19 (113 aa).

This sequence belongs to the bacterial ribosomal protein bL19 family.

This protein is located at the 30S-50S ribosomal subunit interface and may play a role in the structure and function of the aminoacyl-tRNA binding site. This is Large ribosomal subunit protein bL19 from Corynebacterium glutamicum (strain R).